A 218-amino-acid chain; its full sequence is 7-cyano-7-deazaguanine synthase (218 aa).

11–21 (LSGGMDSATLL) provides a ligand contact to ATP. Zn(2+) contacts are provided by cysteine 193, cysteine 201, cysteine 204, and cysteine 207.

This sequence belongs to the QueC family. It depends on Zn(2+) as a cofactor.

The catalysed reaction is 7-carboxy-7-deazaguanine + NH4(+) + ATP = 7-cyano-7-deazaguanine + ADP + phosphate + H2O + H(+). It functions in the pathway purine metabolism; 7-cyano-7-deazaguanine biosynthesis. Catalyzes the ATP-dependent conversion of 7-carboxy-7-deazaguanine (CDG) to 7-cyano-7-deazaguanine (preQ(0)). In Aquifex aeolicus (strain VF5), this protein is 7-cyano-7-deazaguanine synthase.